Consider the following 1113-residue polypeptide: Coiled-coil domain-containing protein 158 (1113 aa).

Residues 1-14 are compositionally biased toward polar residues; sequence MESKAWESNNEDLL. Residues 1–26 form a disordered region; it reads MESKAWESNNEDLLSSSGVTSNGGSS. Residues 15–26 are compositionally biased toward low complexity; the sequence is SSSGVTSNGGSS. Coiled-coil stretches lie at residues 72 to 183 and 243 to 833; these read GKEH…LSHE and VEDQ…QEQE. Disordered stretches follow at residues 848 to 902 and 955 to 1062; these read LQGP…DPTR and CHRS…IETT. Polar residues-rich tracts occupy residues 867-894, 955-974, 994-1017, 1024-1040, and 1053-1062; these read ASVT…TKAN, CHRS…SSET, FTFT…SSPK, LLTS…SQYR, and DSQSPPIETT. The stretch at 1061-1113 forms a coiled coil; sequence TTGKTCRKLQNRLESLQTLVEDLQLKNQAMSSMIRNQEKRIQKVKDQEKMLLK.

This Homo sapiens (Human) protein is Coiled-coil domain-containing protein 158 (CCDC158).